The primary structure comprises 368 residues: RAB6-interacting golgin (368 aa).

Disordered regions lie at residues 1–43 (MAQD…REKA), 55–133 (DGSA…DCKV), and 302–368 (KQMA…AVAT). The span at 11–27 (EELRRLKQNKDPFEPQR) shows a compositional bias: basic and acidic residues. Over residues 80–89 (SPSPVAPSPL) the composition is skewed to pro residues. The span at 114–133 (NSHHGHKSAEVRAPKPDCKV) shows a compositional bias: basic and acidic residues. The stretch at 145–310 (RWEVLQQEQR…AKQMASVERL (166 aa)) forms a coiled coil. The tract at residues 188 to 368 (IQKELQALDD…AKNFSAAVAT (181 aa)) is necessary for interaction with RCHY1.

Belongs to the GORAB family. Interacts with RCHY1. Interacts with SCYL1 and RAB6A/RAB6. As to expression, expressed in small intestine, kidney, skeletal muscle, lung, spleen, brain and heart. High expression is observed in osteoblasts and skin; also expressed in osteoclasts albeit at lower levels.

The protein resides in the cytoplasm. Its subcellular location is the golgi apparatus. In Mus musculus (Mouse), this protein is RAB6-interacting golgin (Gorab).